The primary structure comprises 1625 residues: E3 ubiquitin-protein ligase KEG (1625 aa).

The RING-type zinc-finger motif lies at 10 to 56 (CSVCHTRYNEDERVPLLLQCGHGFCKDCLSKMFSTSSDTTLTCPRCR). Residues 91-106 (YTDDEDDDDEEDGSDE) are compositionally biased toward acidic residues. The tract at residues 91–110 (YTDDEDDDDEEDGSDEDGAR) is disordered. In terms of domain architecture, Protein kinase spans 141 to 427 (RQIGEESSSG…TFNAMLATFL (287 aa)). ATP is bound by residues 147 to 155 (SSSGGFGGV) and Lys-176. ANK repeat units lie at residues 467-496 (DNPNNLHRVVLEGDFEGVRNILAKAAAGGG), 510-540 (DGQSALHLACRRGSAELVEAILEYGEANVDI), 544-573 (DGDPPLVFALAAGSPQCVHVLIKKGANVRS), 579-608 (SGPSVAHVCSYHGQPDCMRELLVAGADPNA), 612-641 (EGETVLHRAVAKKYTDCAIVILENGGSRSM), 647-676 (KCLTPLHMCVATWNVAVIKRWVEVSSPEEI), 685-720 (PVGTALCMAASIRKDHEKEGRELVQILLAAGADPTA), 725-754 (HGRTALHTAAMANNVELVRVILDAGVNANI), 758-787 (HNTIPLHMALARGANSCVSLLLESGSDCNI), 791-826 (EGDNAFHIAADAAKMIRENLDWLIVMLRSPDAAVDV), and 832-863 (KTVRDFLEALPREWISEDLMEALLKRGVHLSP).

As to quaternary structure, interacts with ABI5 and EDR1. Post-translationally, autophosphotylated and autoubiquitinated in vitro. In terms of processing, phosphorylation enhances self-ubiquitination. Autoubiquitinated in response to abscisic acid (ABA) and subsequently targeted to proteolysis. As to expression, expressed in all tissues of young seedlings. In flowering plants, only detected in the youngest part of the stem, anthers and the receptacle of immature siliques. Not found in mature leave, older parts of the stem, flower parts other than anthers or mature siliques.

The protein resides in the golgi apparatus. The protein localises to the trans-Golgi network. It is found in the early endosome. It catalyses the reaction L-seryl-[protein] + ATP = O-phospho-L-seryl-[protein] + ADP + H(+). It carries out the reaction L-threonyl-[protein] + ATP = O-phospho-L-threonyl-[protein] + ADP + H(+). The catalysed reaction is S-ubiquitinyl-[E2 ubiquitin-conjugating enzyme]-L-cysteine + [acceptor protein]-L-lysine = [E2 ubiquitin-conjugating enzyme]-L-cysteine + N(6)-ubiquitinyl-[acceptor protein]-L-lysine.. It participates in protein modification; protein ubiquitination. In terms of biological role, mediates E2-dependent protein ubiquitination. Acts as a negative regulator of abscisic acid signaling. Required for ABI5 degradation, by mediating its ubiquitination. Together with EDR1, may regulate endocytic trafficking and/or the formation of signaling complexes on trans-Golgi network (TGN)/ early endosome (EE) vesicles during stress responses. The polypeptide is E3 ubiquitin-protein ligase KEG (KEG) (Arabidopsis thaliana (Mouse-ear cress)).